A 1174-amino-acid polypeptide reads, in one-letter code: MKIDSLKEKLNIFKIPLNGIKLIEASAGTGKTFTIVLLYLRLLLGIGEKKIYKKKLLVHEILVVTFTNKAKEELYIRIKDGIQNMYLTCINKTTSDSSFQFFFKEIHDIKEAIYVLKRAQNDMNSSSIYTIHSFCQHILQLHTFHFNDIFEEKIIENEDNLYLQATQDFWRRFFYTLPEDIIKIIYQDYKSPDHLLKTIKPFFYIKSINFPTKILNNKKLIMYHEENIKKIIFFKEMWLIYHKIIQKTINDLEINKKIYSKFNLIKWINKITEWAKSETKDYTIPSILKYFTKKNIEKNTINNTCSKYIIFEESEKILKKKFSLKNVIIIYAVKKIHQFLLKEKKKKSLIGFNDLLSILLKTIKKEKFLKDLIIKKYPAAFIDEFQDTDIQQYKIFNLLYKKNKTTVLFLIGDPKQAIYSFRGADIFSYLYAKSKIKKYYYLDTNWRSSINICKSINFLFSQNINPFIFKNIPYIPVVPSSKNLKMNFTINDVAQTPISFFLQEEKEVSIDDYQVWISKQCANEISFWLTCAKTGKAKITTKNGEKILTANDIAILVRNRKEADLIQDELEKLNIISIYSSNKNSVFQTLDAQELLWILESILEPENEILLQQSMASHILKKLSLVVENKTISNKNSYFIIEKLYEYHDIWEKIGVFQMIKIMILEYQKNSFCTEINENHIKNLNFLHIGELLQEQFQFFHKKISLIRWFQKKISTKTQPEYNESIKCFDESPSIKIITIHKSKGLEYPIVWIPFSIDFKKSTLAIYHDQKSLKTFFDENYSNKFLKIADEERLAEDIRFLYVALTRSILHCSIGLACLIKKIIKNRNNSDIHQSGLGFTIQGGKTMNYEGLLEKLKKLSINNFIEVKNNTDNFSFSRKPQTISLICKNKFLNKKNIRNTWSITSFSQLNKINKLSKHHQKEVALKELCIKNQEKKNQSLLTIHNFPKGKKTGLMIHYILKNLHVLKNKNSNWFSCILEKYNIHIKWTSVLIYWIKNIINTPLNDEKIILSRIDEKSSIRELEFFFPIKNMLYSTELNKIIQSINPTSITSPQLSFNPVKGMLTGFVDLVFIWKKKYYILDYKSNWLGKNNNFYSSIHINKEIVKKRYHLQYQIYTIAIHKYLQKKLKNYNYKDDFGGVFYFFLRAIDCPKKNNGIFYTMPNYSLIKKTMTLIS.

The interval 1–852 is DNA-binding and helicase activity, interacts with RecC; it reads MKIDSLKEKL…GGKTMNYEGL (852 aa). The UvrD-like helicase ATP-binding domain occupies 4-449; sequence DSLKEKLNIF…YYLDTNWRSS (446 aa). ATP is bound at residue 25 to 32; that stretch reads ASAGTGKT. The UvrD-like helicase C-terminal domain maps to 479-745; that stretch reads PSSKNLKMNF…KIITIHKSKG (267 aa). The tract at residues 900–1174 is nuclease activity, interacts with RecD and RecA; that stretch reads TWSITSFSQL…LIKKTMTLIS (275 aa). Positions 957, 1068, and 1081 each coordinate Mg(2+). The active-site For nuclease activity is aspartate 1081.

The protein belongs to the helicase family. UvrD subfamily. In terms of assembly, heterotrimer of RecB, RecC and RecD. All subunits contribute to DNA-binding. Interacts with RecA. Mg(2+) is required as a cofactor.

It catalyses the reaction Exonucleolytic cleavage (in the presence of ATP) in either 5'- to 3'- or 3'- to 5'-direction to yield 5'-phosphooligonucleotides.. It carries out the reaction Couples ATP hydrolysis with the unwinding of duplex DNA by translocating in the 3'-5' direction.. The enzyme catalyses ATP + H2O = ADP + phosphate + H(+). In terms of biological role, a helicase/nuclease that prepares dsDNA breaks (DSB) for recombinational DNA repair. Binds to DSBs and unwinds DNA via a highly rapid and processive ATP-dependent bidirectional helicase activity. Unwinds dsDNA until it encounters a Chi (crossover hotspot instigator) sequence from the 3' direction. Cuts ssDNA a few nucleotides 3' to the Chi site. The properties and activities of the enzyme are changed at Chi. The Chi-altered holoenzyme produces a long 3'-ssDNA overhang and facilitates RecA-binding to the ssDNA for homologous DNA recombination and repair. Holoenzyme degrades any linearized DNA that is unable to undergo homologous recombination. In the holoenzyme this subunit contributes ATPase, 3'-5' helicase, exonuclease activity and loads RecA onto ssDNA. In Buchnera aphidicola subsp. Acyrthosiphon pisum (strain APS) (Acyrthosiphon pisum symbiotic bacterium), this protein is RecBCD enzyme subunit RecB.